Here is a 672-residue protein sequence, read N- to C-terminus: UvrABC system protein B (672 aa).

One can recognise a Helicase ATP-binding domain in the interval 26–181 (AGLEDGLAYQ…ILQRLAELQY (156 aa)). 39-46 (GVTGSGKT) serves as a coordination point for ATP. The Beta-hairpin motif lies at 92-115 (YYDYYQPEAYVPSSDTYIEKDASI). One can recognise a Helicase C-terminal domain in the interval 430 to 592 (QVDDLLSEIK…ITPKSIQKAV (163 aa)). One can recognise a UVR domain in the interval 631–666 (AKELRKLEEQMYHHARNLEFEEAAAVRDKIQHIRKG).

The protein belongs to the UvrB family. In terms of assembly, forms a heterotetramer with UvrA during the search for lesions. Interacts with UvrC in an incision complex.

It is found in the cytoplasm. In terms of biological role, the UvrABC repair system catalyzes the recognition and processing of DNA lesions. A damage recognition complex composed of 2 UvrA and 2 UvrB subunits scans DNA for abnormalities. Upon binding of the UvrA(2)B(2) complex to a putative damaged site, the DNA wraps around one UvrB monomer. DNA wrap is dependent on ATP binding by UvrB and probably causes local melting of the DNA helix, facilitating insertion of UvrB beta-hairpin between the DNA strands. Then UvrB probes one DNA strand for the presence of a lesion. If a lesion is found the UvrA subunits dissociate and the UvrB-DNA preincision complex is formed. This complex is subsequently bound by UvrC and the second UvrB is released. If no lesion is found, the DNA wraps around the other UvrB subunit that will check the other stand for damage. This chain is UvrABC system protein B, found in Coxiella burnetii (strain CbuK_Q154) (Coxiella burnetii (strain Q154)).